Reading from the N-terminus, the 428-residue chain is Glutamate-1-semialdehyde 2,1-aminomutase (428 aa).

K267 carries the N6-(pyridoxal phosphate)lysine modification.

The protein belongs to the class-III pyridoxal-phosphate-dependent aminotransferase family. HemL subfamily. In terms of assembly, homodimer. The cofactor is pyridoxal 5'-phosphate.

The protein localises to the cytoplasm. The enzyme catalyses (S)-4-amino-5-oxopentanoate = 5-aminolevulinate. It functions in the pathway porphyrin-containing compound metabolism; protoporphyrin-IX biosynthesis; 5-aminolevulinate from L-glutamyl-tRNA(Glu): step 2/2. The sequence is that of Glutamate-1-semialdehyde 2,1-aminomutase from Desulforapulum autotrophicum (strain ATCC 43914 / DSM 3382 / VKM B-1955 / HRM2) (Desulfobacterium autotrophicum).